The following is a 353-amino-acid chain: MRLTIIIPTCNNEATIRQLLISIESKEHYRILCIDGGSTDQTIPMIERLQRELKHISLIQLQNASIATCINKGLMDIKMTDPHDSDAFMVINPTSIVLPGKLDRLTAAFKNNDNIDMVIGQRAYNYHGEWKLKSADEFIKDNRIVTLTEQPDLLSMMSFDGKLFSAKFAELQCDETLANTYNHAILVKAMQKATDIHLVSQMIVGDNDIDTHATSNDEDFNRYIIEIMKIRQRVMEMLLLPEQRLLYSDMVDRILFNNSLKYYMNEHPAVTHTTIQLVKDYIMSMQHSDYVSQNMFDIINTVEFIGENWDREIYELWRQTLIQVGINRPTYKKFLIQLKGRKFAHRTKSMLKR.

It belongs to the glycosyltransferase 2 family.

This chain is Putative glycosyltransferase TagX (tagX), found in Staphylococcus aureus (strain Mu50 / ATCC 700699).